Consider the following 127-residue polypeptide: Small ribosomal subunit protein uS12 (127 aa).

Asp-89 carries the 3-methylthioaspartic acid modification. The disordered stretch occupies residues 104-127; that stretch reads TQGVKDRKQARSKYGTKRAKAGKK. The segment covering 113–127 has biased composition (basic residues); the sequence is ARSKYGTKRAKAGKK.

This sequence belongs to the universal ribosomal protein uS12 family. In terms of assembly, part of the 30S ribosomal subunit. Contacts proteins S8 and S17. May interact with IF1 in the 30S initiation complex.

In terms of biological role, with S4 and S5 plays an important role in translational accuracy. Interacts with and stabilizes bases of the 16S rRNA that are involved in tRNA selection in the A site and with the mRNA backbone. Located at the interface of the 30S and 50S subunits, it traverses the body of the 30S subunit contacting proteins on the other side and probably holding the rRNA structure together. The combined cluster of proteins S8, S12 and S17 appears to hold together the shoulder and platform of the 30S subunit. The sequence is that of Small ribosomal subunit protein uS12 from Herminiimonas arsenicoxydans.